Here is a 512-residue protein sequence, read N- to C-terminus: Alpha-amylase (512 aa).

Residues 1–29 (MKQQKRLYARLLTLLFALIFLLPHSAAAA) form the signal peptide. Ca(2+) contacts are provided by Asn-133, Asp-190, Ala-210, Asp-212, Asp-223, Asp-229, Asp-231, and Asp-233. Position 190 (Asp-190) interacts with Na(+). Asp-212, Asp-223, and Asp-229 together coordinate Na(+). Asp-260 acts as the Nucleophile in catalysis. Residue His-264 participates in Ca(2+) binding. The Proton donor role is filled by Glu-290. The Ca(2+) site is built by Gly-329, Tyr-331, His-435, Asp-436, and Asp-459.

Belongs to the glycosyl hydrolase 13 family. In terms of assembly, monomer. Ca(2+) serves as cofactor. It depends on Na(+) as a cofactor.

Its subcellular location is the secreted. The catalysed reaction is Endohydrolysis of (1-&gt;4)-alpha-D-glucosidic linkages in polysaccharides containing three or more (1-&gt;4)-alpha-linked D-glucose units.. The sequence is that of Alpha-amylase (amyS) from Bacillus licheniformis.